Reading from the N-terminus, the 510-residue chain is tRNA-2-methylthio-N(6)-dimethylallyladenosine synthase (510 aa).

In terms of domain architecture, MTTase N-terminal spans 19–135; sequence RTFEVRTYGC…LPALLDRARH (117 aa). Cys-28, Cys-64, Cys-98, Cys-172, Cys-176, and Cys-179 together coordinate [4Fe-4S] cluster. The Radical SAM core domain occupies 158–394; sequence RESSYAAWVS…IELQERISLE (237 aa). The region spanning 397-467 is the TRAM domain; the sequence is TAQIGRRVEL…PHHLIADAGL (71 aa). The segment at 477-510 is disordered; it reads DAHAAGQKPRTGVGLGMPAVGAPDPLPATTGCAR.

Belongs to the methylthiotransferase family. MiaB subfamily. In terms of assembly, monomer. [4Fe-4S] cluster serves as cofactor.

Its subcellular location is the cytoplasm. It carries out the reaction N(6)-dimethylallyladenosine(37) in tRNA + (sulfur carrier)-SH + AH2 + 2 S-adenosyl-L-methionine = 2-methylsulfanyl-N(6)-dimethylallyladenosine(37) in tRNA + (sulfur carrier)-H + 5'-deoxyadenosine + L-methionine + A + S-adenosyl-L-homocysteine + 2 H(+). In terms of biological role, catalyzes the methylthiolation of N6-(dimethylallyl)adenosine (i(6)A), leading to the formation of 2-methylthio-N6-(dimethylallyl)adenosine (ms(2)i(6)A) at position 37 in tRNAs that read codons beginning with uridine. The chain is tRNA-2-methylthio-N(6)-dimethylallyladenosine synthase from Mycolicibacterium vanbaalenii (strain DSM 7251 / JCM 13017 / BCRC 16820 / KCTC 9966 / NRRL B-24157 / PYR-1) (Mycobacterium vanbaalenii).